The following is a 124-amino-acid chain: Large ribosomal subunit protein eL31 (124 aa).

Y102 bears the Phosphotyrosine mark.

The protein belongs to the eukaryotic ribosomal protein eL31 family.

This chain is Large ribosomal subunit protein eL31 (RpL31), found in Drosophila melanogaster (Fruit fly).